A 444-amino-acid chain; its full sequence is Enolase (444 aa).

Residues H163 and E172 each coordinate substrate. E215 serves as the catalytic Proton donor. The Mg(2+) site is built by D250, E300, and D327. E300 and D327 together coordinate substrate. Residue K352 is the Proton acceptor of the active site. Substrate-binding positions include 379–382 (SHRS) and K403.

The protein belongs to the enolase family. In terms of assembly, homodimer. Mg(2+) serves as cofactor.

It is found in the cytoplasm. The catalysed reaction is (2R)-2-phosphoglycerate = phosphoenolpyruvate + H2O. It functions in the pathway carbohydrate degradation; glycolysis; pyruvate from D-glyceraldehyde 3-phosphate: step 4/5. The sequence is that of Enolase (PGH1) from Solanum lycopersicum (Tomato).